The sequence spans 464 residues: Soluble pyridine nucleotide transhydrogenase (464 aa).

Asp35 to Cys44 is an FAD binding site.

It belongs to the class-I pyridine nucleotide-disulfide oxidoreductase family. It depends on FAD as a cofactor.

It is found in the cytoplasm. The catalysed reaction is NAD(+) + NADPH = NADH + NADP(+). Conversion of NADPH, generated by peripheral catabolic pathways, to NADH, which can enter the respiratory chain for energy generation. The chain is Soluble pyridine nucleotide transhydrogenase from Azotobacter vinelandii (strain DJ / ATCC BAA-1303).